The sequence spans 300 residues: Junctional adhesion molecule A (300 aa).

An N-terminal signal peptide occupies residues 1–26 (MGTEGKAGRKLLFLFTSMILGSLVQG). Topologically, residues 27–238 (KGSVYTAQSD…MDAVELNVGG (212 aa)) are extracellular. Ig-like V-type domains lie at 28–122 (GSVY…GEVS) and 134–230 (PTIS…AHMD). The N-linked (GlcNAc...) asparagine glycan is linked to asparagine 42. 2 disulfides stabilise this stretch: cysteine 49–cysteine 108 and cysteine 152–cysteine 212. An N-linked (GlcNAc...) asparagine glycan is attached at asparagine 185. Residues 239 to 259 (IVAAVLVTLILLGLLIFGVWF) form a helical membrane-spanning segment. Over 260 to 299 (AYSRGYFERTKKGTAPGKKVIYSQPSTRSEGEFKQTSSFL) the chain is Cytoplasmic. Phosphoserine occurs at positions 282, 285, and 288.

The protein belongs to the immunoglobulin superfamily. As to quaternary structure, interacts with the ninth PDZ domain of MPDZ. Interacts with the first PDZ domain of PARD3. The association between PARD3 and PARD6B probably disrupts this interaction. Interacts with ITGAL (via I-domain). Interacts with CD151.

It localises to the cell junction. It is found in the tight junction. The protein resides in the cell membrane. In terms of biological role, seems to play a role in epithelial tight junction formation. Appears early in primordial forms of cell junctions and recruits PARD3. The association of the PARD6-PARD3 complex may prevent the interaction of PARD3 with JAM1, thereby preventing tight junction assembly. Plays a role in regulating monocyte transmigration involved in integrity of epithelial barrier. Ligand for integrin alpha-L/beta-2 involved in memory T-cell and neutrophil transmigration. Involved in platelet activation. In Mus musculus (Mouse), this protein is Junctional adhesion molecule A (F11r).